Consider the following 303-residue polypeptide: Ribonucleoside-diphosphate reductase small subunit (303 aa).

Aspartate 60, glutamate 90, and histidine 93 together coordinate Fe cation. The active site involves tyrosine 97. A helical membrane pass occupies residues leucine 147–leucine 167. Positions 153, 187, and 190 each coordinate Fe cation.

This sequence belongs to the ribonucleoside diphosphate reductase small chain family. In terms of assembly, heterotetramer composed of a homodimer of the large subunit (R1) and a homodimer of the small subunit (R2). Larger multisubunit protein complex are also active, composed of (R1)n(R2)n. It depends on Fe cation as a cofactor.

Its subcellular location is the host membrane. The enzyme catalyses a 2'-deoxyribonucleoside 5'-diphosphate + [thioredoxin]-disulfide + H2O = a ribonucleoside 5'-diphosphate + [thioredoxin]-dithiol. Its function is as follows. Ribonucleoside-diphosphate reductase holoenzyme provides the precursors necessary for viral DNA synthesis. Allows virus growth in non-dividing cells, as well as reactivation from latency in infected hosts. Catalyzes the biosynthesis of deoxyribonucleotides from the corresponding ribonucleotides. In Suid herpesvirus 1 (strain Kaplan) (SuHV-1), this protein is Ribonucleoside-diphosphate reductase small subunit.